A 435-amino-acid chain; its full sequence is ATP-dependent Clp protease ATP-binding subunit ClpX 3 (435 aa).

Residues 1 to 53 enclose the ClpX-type ZB domain; that stretch reads MSSDPPAKTQHCSFCGIEQGRDTPLIAGIEGQICEACVRLAEQVVANWGRKRS. Zn(2+) contacts are provided by Cys-12, Cys-15, Cys-34, and Cys-37. 125–132 is a binding site for ATP; that stretch reads PTGTGKTL.

Belongs to the ClpX chaperone family. As to quaternary structure, component of the ClpX-ClpP complex. Forms a hexameric ring that, in the presence of ATP, binds to fourteen ClpP subunits assembled into a disk-like structure with a central cavity, resembling the structure of eukaryotic proteasomes.

Functionally, ATP-dependent specificity component of the Clp protease. It directs the protease to specific substrates. Can perform chaperone functions in the absence of ClpP. The sequence is that of ATP-dependent Clp protease ATP-binding subunit ClpX 3 from Methylococcus capsulatus (strain ATCC 33009 / NCIMB 11132 / Bath).